Here is a 117-residue protein sequence, read N- to C-terminus: UPF0145 protein PH1682 (117 aa).

Belongs to the UPF0145 family.

In Pyrococcus horikoshii (strain ATCC 700860 / DSM 12428 / JCM 9974 / NBRC 100139 / OT-3), this protein is UPF0145 protein PH1682.